A 466-amino-acid polypeptide reads, in one-letter code: Glutamate--tRNA ligase (466 aa).

A 'HIGH' region motif is present at residues 10–20 (PSPTGALHIGG). 4 residues coordinate Zn(2+): Cys99, Cys101, Cys126, and Asp128. Residues 239–243 (KLSKR) carry the 'KMSKS' region motif. Lys242 provides a ligand contact to ATP.

The protein belongs to the class-I aminoacyl-tRNA synthetase family. Glutamate--tRNA ligase type 1 subfamily. As to quaternary structure, monomer. Zn(2+) serves as cofactor.

The protein localises to the cytoplasm. It catalyses the reaction tRNA(Glu) + L-glutamate + ATP = L-glutamyl-tRNA(Glu) + AMP + diphosphate. Functionally, catalyzes the attachment of glutamate to tRNA(Glu) in a two-step reaction: glutamate is first activated by ATP to form Glu-AMP and then transferred to the acceptor end of tRNA(Glu). The chain is Glutamate--tRNA ligase from Pelagibacter ubique (strain HTCC1062).